Here is a 321-residue protein sequence, read N- to C-terminus: Aspartate carbamoyltransferase catalytic subunit (321 aa).

Residues Arg60 and Thr61 each contribute to the carbamoyl phosphate site. Lys88 provides a ligand contact to L-aspartate. Carbamoyl phosphate-binding residues include Arg110, His138, and Gln141. Arg171 and Arg225 together coordinate L-aspartate. Positions 266 and 267 each coordinate carbamoyl phosphate.

Belongs to the aspartate/ornithine carbamoyltransferase superfamily. ATCase family. As to quaternary structure, heterododecamer (2C3:3R2) of six catalytic PyrB chains organized as two trimers (C3), and six regulatory PyrI chains organized as three dimers (R2).

The enzyme catalyses carbamoyl phosphate + L-aspartate = N-carbamoyl-L-aspartate + phosphate + H(+). It functions in the pathway pyrimidine metabolism; UMP biosynthesis via de novo pathway; (S)-dihydroorotate from bicarbonate: step 2/3. Its function is as follows. Catalyzes the condensation of carbamoyl phosphate and aspartate to form carbamoyl aspartate and inorganic phosphate, the committed step in the de novo pyrimidine nucleotide biosynthesis pathway. This is Aspartate carbamoyltransferase catalytic subunit from Sorangium cellulosum (strain So ce56) (Polyangium cellulosum (strain So ce56)).